The sequence spans 94 residues: Pyrimidine/purine nucleoside phosphorylase (94 aa).

Belongs to the nucleoside phosphorylase PpnP family.

The enzyme catalyses a purine D-ribonucleoside + phosphate = a purine nucleobase + alpha-D-ribose 1-phosphate. The catalysed reaction is adenosine + phosphate = alpha-D-ribose 1-phosphate + adenine. It carries out the reaction cytidine + phosphate = cytosine + alpha-D-ribose 1-phosphate. It catalyses the reaction guanosine + phosphate = alpha-D-ribose 1-phosphate + guanine. The enzyme catalyses inosine + phosphate = alpha-D-ribose 1-phosphate + hypoxanthine. The catalysed reaction is thymidine + phosphate = 2-deoxy-alpha-D-ribose 1-phosphate + thymine. It carries out the reaction uridine + phosphate = alpha-D-ribose 1-phosphate + uracil. It catalyses the reaction xanthosine + phosphate = alpha-D-ribose 1-phosphate + xanthine. Its function is as follows. Catalyzes the phosphorolysis of diverse nucleosides, yielding D-ribose 1-phosphate and the respective free bases. Can use uridine, adenosine, guanosine, cytidine, thymidine, inosine and xanthosine as substrates. Also catalyzes the reverse reactions. The protein is Pyrimidine/purine nucleoside phosphorylase of Salmonella paratyphi C (strain RKS4594).